The chain runs to 234 residues: MKKVMELVDVWKIYDLGEVKVEALRGVSFEVFEGEYVIIIGPSGSGKSTLLHILGCLDRPTKGKVLIEGEEVSRMGDRRLAQVRNRKIGFVFQSYNLLPRLTALENVELPMIYAGVPAKERKRRAKELLELVGLGDRLHHRPNQLSGGQQQRVAIARALANDPVFILADEPTGNLDTKTGEEILELFRKLHEMGKTLVVVTHNLEMVDEGTCIVRIRDGRIEGIERRGVVYGDT.

Positions 5-234 (MELVDVWKIY…ERRGVVYGDT (230 aa)) constitute an ABC transporter domain. 41 to 48 (GPSGSGKS) provides a ligand contact to ATP.

Belongs to the ABC transporter superfamily.

This is an uncharacterized protein from Thermotoga maritima (strain ATCC 43589 / DSM 3109 / JCM 10099 / NBRC 100826 / MSB8).